Reading from the N-terminus, the 158-residue chain is Ribosome maturation factor RimP (158 aa).

This sequence belongs to the RimP family.

The protein localises to the cytoplasm. In terms of biological role, required for maturation of 30S ribosomal subunits. This chain is Ribosome maturation factor RimP, found in Leuconostoc citreum (strain KM20).